We begin with the raw amino-acid sequence, 282 residues long: 2-dehydro-3-deoxyphosphooctonate aldolase (282 aa).

It belongs to the KdsA family.

Its subcellular location is the cytoplasm. It carries out the reaction D-arabinose 5-phosphate + phosphoenolpyruvate + H2O = 3-deoxy-alpha-D-manno-2-octulosonate-8-phosphate + phosphate. Its pathway is carbohydrate biosynthesis; 3-deoxy-D-manno-octulosonate biosynthesis; 3-deoxy-D-manno-octulosonate from D-ribulose 5-phosphate: step 2/3. The protein operates within bacterial outer membrane biogenesis; lipopolysaccharide biosynthesis. This chain is 2-dehydro-3-deoxyphosphooctonate aldolase, found in Shewanella sp. (strain MR-4).